The chain runs to 396 residues: Phosphopentomutase (396 aa).

Residues Asp-13, Asp-288, His-293, Asp-329, His-330, and His-341 each contribute to the Mn(2+) site.

This sequence belongs to the phosphopentomutase family. Mn(2+) serves as cofactor.

The protein resides in the cytoplasm. It carries out the reaction 2-deoxy-alpha-D-ribose 1-phosphate = 2-deoxy-D-ribose 5-phosphate. The enzyme catalyses alpha-D-ribose 1-phosphate = D-ribose 5-phosphate. The protein operates within carbohydrate degradation; 2-deoxy-D-ribose 1-phosphate degradation; D-glyceraldehyde 3-phosphate and acetaldehyde from 2-deoxy-alpha-D-ribose 1-phosphate: step 1/2. Isomerase that catalyzes the conversion of deoxy-ribose 1-phosphate (dRib-1-P) and ribose 1-phosphate (Rib-1-P) to deoxy-ribose 5-phosphate (dRib-5-P) and ribose 5-phosphate (Rib-5-P), respectively. This is Phosphopentomutase from Clostridium perfringens (strain SM101 / Type A).